A 67-amino-acid polypeptide reads, in one-letter code: Kappa-conotoxin-like 2 (67 aa).

The N-terminal stretch at 1-26 is a signal peptide; sequence MMFRLTSVSCFLLVIACLNLFQVVLT. Cystine bridges form between cysteine 29–cysteine 43, cysteine 36–cysteine 48, cysteine 42–cysteine 51, and cysteine 47–cysteine 55. Position 59 is a phenylalanine amide (phenylalanine 59). Positions 63-67 are excised as a propeptide; it reads ATFQE.

It belongs to the conotoxin I2 superfamily. Expressed by the venom duct.

It localises to the secreted. Inhibits the vertebrate voltage-gated potassium channels Kv1.1/KCNA1 and Kv1.3/KCNA3. The protein is Kappa-conotoxin-like 2 of Conus vexillum (Flag cone).